Here is a 5801-residue protein sequence, read N- to C-terminus: uncharacterized protein (5801 aa).

Disordered stretches follow at residues Asp1114 to Ile1136, Lys1827 to Asn1846, Asn2040 to Phe2109, Glu3351 to Gly3392, Asp5134 to Asp5168, Ile5478 to Ile5573, and His5600 to Gly5638. Low complexity-rich tracts occupy residues Asn1118–Lys1134, Ser1831–Asn1846, Gln2048–Gln2096, Ser3353–Gly3392, and Asn5135–Asn5153. A compositionally biased stretch (acidic residues) spans Asp5496–Ile5573. Residues Gln5617–Gln5629 show a composition bias toward basic and acidic residues.

This is an uncharacterized protein from Dictyostelium discoideum (Social amoeba).